Reading from the N-terminus, the 185-residue chain is Ribosome-recycling factor (185 aa).

It belongs to the RRF family.

The protein resides in the cytoplasm. Its function is as follows. Responsible for the release of ribosomes from messenger RNA at the termination of protein biosynthesis. May increase the efficiency of translation by recycling ribosomes from one round of translation to another. In Streptococcus pneumoniae serotype 2 (strain D39 / NCTC 7466), this protein is Ribosome-recycling factor.